A 188-amino-acid polypeptide reads, in one-letter code: Ribose 1,5-bisphosphate phosphokinase PhnN (188 aa).

This sequence belongs to the ribose 1,5-bisphosphokinase family.

It catalyses the reaction alpha-D-ribose 1,5-bisphosphate + ATP = 5-phospho-alpha-D-ribose 1-diphosphate + ADP. The protein operates within metabolic intermediate biosynthesis; 5-phospho-alpha-D-ribose 1-diphosphate biosynthesis; 5-phospho-alpha-D-ribose 1-diphosphate from D-ribose 5-phosphate (route II): step 3/3. In terms of biological role, catalyzes the phosphorylation of ribose 1,5-bisphosphate to 5-phospho-D-ribosyl alpha-1-diphosphate (PRPP). The chain is Ribose 1,5-bisphosphate phosphokinase PhnN from Dickeya zeae (strain Ech586) (Dickeya dadantii (strain Ech586)).